Consider the following 188-residue polypeptide: ATP synthase subunit b (188 aa).

Residues 30–50 (IVWSLIPFLIILIVFWKLVLP) form a helical membrane-spanning segment.

This sequence belongs to the ATPase B chain family. F-type ATPases have 2 components, F(1) - the catalytic core - and F(0) - the membrane proton channel. F(1) has five subunits: alpha(3), beta(3), gamma(1), delta(1), epsilon(1). F(0) has three main subunits: a(1), b(2) and c(10-14). The alpha and beta chains form an alternating ring which encloses part of the gamma chain. F(1) is attached to F(0) by a central stalk formed by the gamma and epsilon chains, while a peripheral stalk is formed by the delta and b chains.

Its subcellular location is the cell membrane. Its function is as follows. F(1)F(0) ATP synthase produces ATP from ADP in the presence of a proton or sodium gradient. F-type ATPases consist of two structural domains, F(1) containing the extramembraneous catalytic core and F(0) containing the membrane proton channel, linked together by a central stalk and a peripheral stalk. During catalysis, ATP synthesis in the catalytic domain of F(1) is coupled via a rotary mechanism of the central stalk subunits to proton translocation. Functionally, component of the F(0) channel, it forms part of the peripheral stalk, linking F(1) to F(0). This Corynebacterium glutamicum (strain R) protein is ATP synthase subunit b.